Consider the following 644-residue polypeptide: Exoribonuclease 2 (644 aa).

The RNB domain occupies 189-516 (RQDLTALNFV…NHRLLKAVIK (328 aa)). The S1 motif domain maps to 561 to 643 (NTRFAAEIID…ETRSIIARPA (83 aa)).

Belongs to the RNR ribonuclease family. RNase II subfamily.

It localises to the cytoplasm. The catalysed reaction is Exonucleolytic cleavage in the 3'- to 5'-direction to yield nucleoside 5'-phosphates.. In terms of biological role, involved in mRNA degradation. Hydrolyzes single-stranded polyribonucleotides processively in the 3' to 5' direction. The chain is Exoribonuclease 2 from Salmonella newport (strain SL254).